A 400-amino-acid chain; its full sequence is Nicotinate phosphoribosyltransferase (400 aa).

Residue His-220 is modified to Phosphohistidine; by autocatalysis.

It belongs to the NAPRTase family. Post-translationally, transiently phosphorylated on a His residue during the reaction cycle. Phosphorylation strongly increases the affinity for substrates and increases the rate of nicotinate D-ribonucleotide production. Dephosphorylation regenerates the low-affinity form of the enzyme, leading to product release.

The catalysed reaction is nicotinate + 5-phospho-alpha-D-ribose 1-diphosphate + ATP + H2O = nicotinate beta-D-ribonucleotide + ADP + phosphate + diphosphate. The protein operates within cofactor biosynthesis; NAD(+) biosynthesis; nicotinate D-ribonucleotide from nicotinate: step 1/1. In terms of biological role, catalyzes the synthesis of beta-nicotinate D-ribonucleotide from nicotinate and 5-phospho-D-ribose 1-phosphate at the expense of ATP. This Escherichia coli O17:K52:H18 (strain UMN026 / ExPEC) protein is Nicotinate phosphoribosyltransferase.